The sequence spans 361 residues: 3-dehydroquinate synthase (361 aa).

NAD(+)-binding positions include 71–76 (DGEQYK), 105–109 (GVIGD), 129–130 (TT), K142, and K151. Zn(2+) is bound by residues E184, H247, and H264.

Belongs to the sugar phosphate cyclases superfamily. Dehydroquinate synthase family. Co(2+) is required as a cofactor. It depends on Zn(2+) as a cofactor. Requires NAD(+) as cofactor.

The protein localises to the cytoplasm. It carries out the reaction 7-phospho-2-dehydro-3-deoxy-D-arabino-heptonate = 3-dehydroquinate + phosphate. It participates in metabolic intermediate biosynthesis; chorismate biosynthesis; chorismate from D-erythrose 4-phosphate and phosphoenolpyruvate: step 2/7. Catalyzes the conversion of 3-deoxy-D-arabino-heptulosonate 7-phosphate (DAHP) to dehydroquinate (DHQ). The chain is 3-dehydroquinate synthase from Pectobacterium atrosepticum (strain SCRI 1043 / ATCC BAA-672) (Erwinia carotovora subsp. atroseptica).